Here is a 266-residue protein sequence, read N- to C-terminus: Ribonuclease HII (266 aa).

An RNase H type-2 domain is found at 73–266 (SPVAGVDEAG…NCGSRQKCEG (194 aa)). A divalent metal cation-binding residues include D79, E80, and D173.

It belongs to the RNase HII family. Requires Mn(2+) as cofactor. Mg(2+) serves as cofactor.

It is found in the cytoplasm. The enzyme catalyses Endonucleolytic cleavage to 5'-phosphomonoester.. In terms of biological role, endonuclease that specifically degrades the RNA of RNA-DNA hybrids. This is Ribonuclease HII from Pelotomaculum thermopropionicum (strain DSM 13744 / JCM 10971 / SI).